A 577-amino-acid polypeptide reads, in one-letter code: Adenine deaminase (577 aa).

The protein belongs to the metallo-dependent hydrolases superfamily. Adenine deaminase family. Mn(2+) serves as cofactor.

It catalyses the reaction adenine + H2O + H(+) = hypoxanthine + NH4(+). This chain is Adenine deaminase, found in Geobacillus kaustophilus (strain HTA426).